Consider the following 250-residue polypeptide: 4-hydroxy-tetrahydrodipicolinate reductase (250 aa).

Residues 9–14 (GATGKM), 79–81 (GTT), and 103–106 (SANM) each bind NAD(+). His135 acts as the Proton donor/acceptor in catalysis. Residue His136 participates in (S)-2,3,4,5-tetrahydrodipicolinate binding. Lys139 functions as the Proton donor in the catalytic mechanism. Position 145–146 (145–146 (GT)) interacts with (S)-2,3,4,5-tetrahydrodipicolinate.

This sequence belongs to the DapB family.

It is found in the cytoplasm. The enzyme catalyses (S)-2,3,4,5-tetrahydrodipicolinate + NAD(+) + H2O = (2S,4S)-4-hydroxy-2,3,4,5-tetrahydrodipicolinate + NADH + H(+). It carries out the reaction (S)-2,3,4,5-tetrahydrodipicolinate + NADP(+) + H2O = (2S,4S)-4-hydroxy-2,3,4,5-tetrahydrodipicolinate + NADPH + H(+). It participates in amino-acid biosynthesis; L-lysine biosynthesis via DAP pathway; (S)-tetrahydrodipicolinate from L-aspartate: step 4/4. In terms of biological role, catalyzes the conversion of 4-hydroxy-tetrahydrodipicolinate (HTPA) to tetrahydrodipicolinate. This is 4-hydroxy-tetrahydrodipicolinate reductase from Rickettsia bellii (strain OSU 85-389).